We begin with the raw amino-acid sequence, 302 residues long: Sulfate adenylyltransferase subunit 2 (302 aa).

Belongs to the PAPS reductase family. CysD subfamily. As to quaternary structure, heterodimer composed of CysD, the smaller subunit, and CysN.

The enzyme catalyses sulfate + ATP + H(+) = adenosine 5'-phosphosulfate + diphosphate. The protein operates within sulfur metabolism; hydrogen sulfide biosynthesis; sulfite from sulfate: step 1/3. Functionally, with CysN forms the ATP sulfurylase (ATPS) that catalyzes the adenylation of sulfate producing adenosine 5'-phosphosulfate (APS) and diphosphate, the first enzymatic step in sulfur assimilation pathway. APS synthesis involves the formation of a high-energy phosphoric-sulfuric acid anhydride bond driven by GTP hydrolysis by CysN coupled to ATP hydrolysis by CysD. The protein is Sulfate adenylyltransferase subunit 2 of Klebsiella pneumoniae (strain 342).